The chain runs to 77 residues: Small ribosomal subunit protein uS17 (77 aa).

The protein belongs to the universal ribosomal protein uS17 family. In terms of assembly, part of the 30S ribosomal subunit.

One of the primary rRNA binding proteins, it binds specifically to the 5'-end of 16S ribosomal RNA. The chain is Small ribosomal subunit protein uS17 from Wolbachia sp. subsp. Brugia malayi (strain TRS).